The chain runs to 221 residues: ATP-dependent Clp protease proteolytic subunit 1, mitochondrial (221 aa).

Residues 1–25 (MLRRLVTSSLSASRSMSASVQSRVG) constitute a mitochondrion transit peptide. Ser120 functions as the Nucleophile in the catalytic mechanism. Residue His145 is part of the active site.

This sequence belongs to the peptidase S14 family. In terms of assembly, tetradecamer that assembles into a two heptameric rings with a central cavity. Expressed in the intestine.

The protein resides in the mitochondrion matrix. The enzyme catalyses Hydrolysis of proteins to small peptides in the presence of ATP and magnesium. alpha-casein is the usual test substrate. In the absence of ATP, only oligopeptides shorter than five residues are hydrolyzed (such as succinyl-Leu-Tyr-|-NHMec, and Leu-Tyr-Leu-|-Tyr-Trp, in which cleavage of the -Tyr-|-Leu- and -Tyr-|-Trp bonds also occurs).. Functionally, clp cleaves peptides in various proteins in a process that requires ATP hydrolysis. Clp may be responsible for a fairly general and central housekeeping function rather than for the degradation of specific substrates. The sequence is that of ATP-dependent Clp protease proteolytic subunit 1, mitochondrial (clpp-1) from Caenorhabditis elegans.